Here is a 370-residue protein sequence, read N- to C-terminus: Peptidyl-prolyl cis-trans isomerase D (370 aa).

Position 5 is a phosphoserine (Ser5). One can recognise a PPIase cyclophilin-type domain in the interval 19–183 (FFDVDIGGER…KLCVIAECGE (165 aa)). Lys171 bears the N6-acetyllysine mark. A chaperone activity region spans residues 185–215 (KEGDDWGIFPKDGSGDSHPDFPEDADVDLKD). Ser198 carries the post-translational modification Phosphoserine. The interaction with HSP90AB1 stretch occupies residues 214-370 (KDVDKILLIS…EKAAYAKMFA (157 aa)). 3 TPR repeats span residues 223–256 (SEDL…VEGS), 273–306 (LSCV…DPSN), and 307–340 (TKAL…APED).

Belongs to the cyclophilin-type PPIase family. PPIase D subfamily. Identified in ESR1 or NR3C1/GCR steroid receptor-chaperone complexes. Found in HSP90 chaperone complexes with kinase clients LCK or EIF2AK1. Two monomers associate with one HSP90 homodimer. Interacts with HSP90AA1. Interacts with HSP90AB1; PPID and FKBP4 compete for binding to HSP90AB1 and the interaction is mutually exclusive with the PPID:HSPA8 interaction. Interacts with HSPA8; PPID and STIP1 but not FKBP4 compete for binding to HSPA8 and the interaction is mutually exclusive with the PPID:HSP90AB1 interaction. Interacts with S100A1 and S100A2; the interactions dissociate the PPID:HSP90AA1 interaction. Interacts with S100A6. Interacts with MYB, ILF2, XRCC6, RACK1 and RPS3. Interacts with cytoplasmic dynein 1 intermediate chain (DYNC1I1 or DYNC1I2). Post-translationally, the N-terminus is blocked. Detected in heart, thymis and brain.

It is found in the cytoplasm. It localises to the nucleus. The protein resides in the nucleolus. Its subcellular location is the nucleoplasm. It catalyses the reaction [protein]-peptidylproline (omega=180) = [protein]-peptidylproline (omega=0). Its activity is regulated as follows. Less sensitive to inhibition by cyclosporin A than is CYP-18. Functionally, PPIase that catalyzes the cis-trans isomerization of proline imidic peptide bonds in oligopeptides and may therefore assist protein folding. Proposed to act as a co-chaperone in HSP90 complexes such as in unligated steroid receptors heterocomplexes. Different co-chaperones seem to compete for association with HSP90 thus establishing distinct HSP90-co-chaperone-receptor complexes with the potential to exert tissue-specific receptor activity control. May have a preference for estrogen receptor complexes and is not found in glucocorticoid receptor complexes. May be involved in cytoplasmic dynein-dependent movement of the receptor from the cytoplasm to the nucleus. May regulate MYB by inhibiting its DNA-binding activity. Involved in regulation of AHR signaling by promoting the formation of the AHR:ARNT dimer; the function is independent of HSP90 but requires the chaperone activity. Involved in regulation of UV radiation-induced apoptosis. The protein is Peptidyl-prolyl cis-trans isomerase D of Bos taurus (Bovine).